The primary structure comprises 206 residues: MRRFVLDTSVFTNPDVYLRFDEEPMQAISVFLGLARRADAEFYMPGPVYQELCNLRSMDLIGAEFETEVYIRSPRRFSMTIPSEVLYEFIEEVRTRIQRGLRIAEEHARQAGQAESLPPELITQLRERYREAMRRGILDSREDIDVVLLAYELDATLVSADEGMRKFAERIGIKLVNPRYLRGVMQNLAGDDPGHAPPCGPDQPAG.

Positions 187 to 206 (NLAGDDPGHAPPCGPDQPAG) are disordered. The segment covering 195–206 (HAPPCGPDQPAG) has biased composition (pro residues).

Belongs to the HARP family.

The catalysed reaction is Endonucleolytic cleavage of RNA, removing 5'-extranucleotides from tRNA precursor.. RNA-free RNase P that catalyzes the removal of the 5'-leader sequence from pre-tRNA to produce the mature 5'-terminus. This chain is RNA-free ribonuclease P, found in Halorhodospira halophila (strain DSM 244 / SL1) (Ectothiorhodospira halophila (strain DSM 244 / SL1)).